Here is an 86-residue protein sequence, read N- to C-terminus: Toxin Aam2 (86 aa).

An N-terminal signal peptide occupies residues M1 to G20. The LCN-type CS-alpha/beta domain maps to R22–N84. 4 cysteine pairs are disulfide-bonded: C32–C83, C36–C56, C42–C66, and C46–C68. N84 is subject to Asparagine amide.

It belongs to the long (4 C-C) scorpion toxin superfamily. Sodium channel inhibitor family. Alpha subfamily. As to expression, expressed by the venom gland.

It localises to the secreted. Its function is as follows. Alpha toxins bind voltage-independently at site-3 of sodium channels (Nav) and inhibit the inactivation of the activated channels, thereby blocking neuronal transmission. In Androctonus amoreuxi (African fattail scorpion), this protein is Toxin Aam2.